Reading from the N-terminus, the 627-residue chain is Pro-interleukin-16 (627 aa).

Disordered regions lie at residues 34-136 (HMPL…SIKQ), 162-267 (SSGE…LTRS), and 316-337 (GASP…ETSG). Phosphoserine is present on Ser-217. Over residues 318 to 337 (SPTSLSNEDSAANGCAETSG) the composition is skewed to polar residues. The interaction with PPP1R12A, PPP1R12B and PPP1R12C stretch occupies residues 401–497 (KQLDSIHVTI…IVTRKLTPET (97 aa)). PDZ domains follow at residues 407–492 (HVTI…VTRK) and 529–614 (TVTL…IKRK).

In terms of assembly, homotetramer. Pro-interleukin-16 interacts (via PDZ 2 domain) with PPP1R12A, PPP1R12B and PPP1R12C. Pro-interleukin-16 interacts with GRIN2A. Pro-interleukin-16 interacts with GABPB1. Pro-interleukin-16 interacts (via PDZ 3 domain) with HDAC3.

It localises to the secreted. Its subcellular location is the cytoplasm. The protein localises to the nucleus. Functionally, interleukin-16 stimulates a migratory response in CD4+ lymphocytes, monocytes, and eosinophils. Primes CD4+ T-cells for IL-2 and IL-15 responsiveness. Also induces T-lymphocyte expression of interleukin 2 receptor. Ligand for CD4. Pro-interleukin-16 is involved in cell cycle progression in T-cells. Appears to be involved in transcriptional regulation of SKP2 and is probably part of a transcriptional repression complex on the core promoter of the SKP2 gene. May act as a scaffold for GABPB1 (the DNA-binding subunit the GABP transcription factor complex) and HDAC3 thus maintaining transcriptional repression and blocking cell cycle progression in resting T-cells. In Saimiri sciureus (Common squirrel monkey), this protein is Pro-interleukin-16 (IL16).